The following is a 658-amino-acid chain: Carnitine O-palmitoyltransferase 2, mitochondrial (658 aa).

The transit peptide at 1–25 (MMPRLLLRDWPRCPSLVLGAPSRPL) directs the protein to the mitochondrion. Over 26 to 178 (SAVSGPAEYL…GLLEPEVFHL (153 aa)) the chain is Mitochondrial matrix. The residue at position 69 (Lys69) is an N6-succinyllysine. Lys79 bears the N6-acetyllysine mark. Lys85 bears the N6-succinyllysine mark. Residues 179–208 (NPARSDTDAFKRLIRFVPSSLSWYGAYLVN) constitute an intramembrane region (note=Mitochondrial inner membrane). Residues 209–658 (AYPLDMSQYF…DALEGKAIKT (450 aa)) are Mitochondrial matrix-facing. Lys239 is modified (N6-acetyllysine; alternate). The residue at position 239 (Lys239) is an N6-succinyllysine; alternate. Position 305 is an N6-acetyllysine (Lys305). The active-site Proton acceptor is His372. N6-acetyllysine; alternate is present on Lys418. Lys418 carries the N6-succinyllysine; alternate modification. Residues Lys424 and Lys439 each carry the N6-succinyllysine modification. 452 to 464 (GKEFLKKKKLSPD) lines the CoA pocket. Tyr486, Ser488, and Thr499 together coordinate (R)-carnitine. N6-acetyllysine; alternate occurs at positions 510 and 544. 2 positions are modified to N6-succinyllysine; alternate: Lys510 and Lys544.

Belongs to the carnitine/choline acetyltransferase family.

It localises to the mitochondrion inner membrane. The catalysed reaction is (R)-carnitine + hexadecanoyl-CoA = O-hexadecanoyl-(R)-carnitine + CoA. It catalyses the reaction octanoyl-CoA + (R)-carnitine = O-octanoyl-(R)-carnitine + CoA. The enzyme catalyses decanoyl-CoA + (R)-carnitine = O-decanoyl-(R)-carnitine + CoA. It carries out the reaction dodecanoyl-CoA + (R)-carnitine = O-dodecanoyl-R-carnitine + CoA. The catalysed reaction is tetradecanoyl-CoA + (R)-carnitine = O-tetradecanoyl-(R)-carnitine + CoA. It catalyses the reaction (R)-carnitine + octadecanoyl-CoA = O-octadecanoyl-(R)-carnitine + CoA. The enzyme catalyses eicosanoyl-CoA + (R)-carnitine = O-eicosanoyl-(R)-carnitine + CoA. It carries out the reaction (9Z)-tetradecenoyl-CoA + (R)-carnitine = O-(9Z)-tetradecenoyl-(R)-carnitine + CoA. The catalysed reaction is (5Z)-tetradecenoyl-CoA + (R)-carnitine = O-(5Z)-tetradecenoyl-(R)-carnitine + CoA. It catalyses the reaction (R)-carnitine + (9Z)-octadecenoyl-CoA = O-(9Z)-octadecenoyl-(R)-carnitine + CoA. The enzyme catalyses 4,8-dimethylnonanoyl-CoA + (R)-carnitine = O-4,8-dimethylnonanoyl-(R)-carnitine + CoA. It participates in lipid metabolism; fatty acid beta-oxidation. Its function is as follows. Involved in the intramitochondrial synthesis of acylcarnitines from accumulated acyl-CoA metabolites. Reconverts acylcarnitines back into the respective acyl-CoA esters that can then undergo beta-oxidation, an essential step for the mitochondrial uptake of long-chain fatty acids and their subsequent beta-oxidation in the mitochondrion. Active with medium (C8-C12) and long-chain (C14-C18) acyl-CoA esters. The sequence is that of Carnitine O-palmitoyltransferase 2, mitochondrial from Mus musculus (Mouse).